A 208-amino-acid polypeptide reads, in one-letter code: Kininogen-1b (208 aa).

An N-terminal signal peptide occupies residues 1–23 (MRLWFCLSFFIVLCLEHFPETLA). Residues 27 to 44 (NVPESEEKTEQYLRDLPK) are compositionally biased toward basic and acidic residues. The disordered stretch occupies residues 27–208 (NVPESEEKTE…RGKFHSQSHV (182 aa)).

This sequence belongs to the bradykinin-related peptide family. In terms of tissue distribution, expressed by the skin glands.

It localises to the secreted. In terms of biological role, in vitro, produces constriction of guinea pig ileum smooth muscle. May target bradykinin receptors (BDKRB). The protein is Kininogen-1b of Bombina maxima (Giant fire-bellied toad).